Here is a 196-residue protein sequence, read N- to C-terminus: Large ribosomal subunit protein bL9 (196 aa).

Belongs to the bacterial ribosomal protein bL9 family.

Functionally, binds to the 23S rRNA. The chain is Large ribosomal subunit protein bL9 from Rhodopseudomonas palustris (strain HaA2).